The primary structure comprises 258 residues: uncharacterized protein (258 aa).

An N-terminal signal peptide occupies residues 1-19 (MVGILPLCCSGCVPSLCCS). 3 helical membrane passes run 94–114 (GLLL…NWTG), 197–217 (CLIL…LPYI), and 219–239 (PGLS…SSLV).

Its subcellular location is the membrane. This is an uncharacterized protein from Homo sapiens (Human).